The following is a 429-amino-acid chain: GDP-fucose protein O-fucosyltransferase 2 (429 aa).

Positions M1–A21 are cleaved as a signal peptide. Residue P53–N57 participates in GDP-beta-L-fucose binding. E54 serves as the catalytic Proton acceptor. C161 and C192 are disulfide-bonded. 3 N-linked (GlcNAc...) asparagine glycosylation sites follow: N189, N209, and N259. GDP-beta-L-fucose-binding positions include H292–R294, D371, and T388–F389. Residues C412 and C419 are joined by a disulfide bond.

It belongs to the glycosyltransferase 68 family. In terms of tissue distribution, isoform A is expressed in fetal liver and peripheral blood lymphocytes. Isoform B is expressed in spleen, lung, testis, bone marrow, thymus, pancreas, prostate, fetal brain, fetal liver and fetal kidney. Isoform C is expressed in brain, heart, spleen, liver, lung, stomach, testis, placenta, skin, thymus, pancreas, mammary gland, prostate, fetal brain, fetal liver and fetal heart.

It is found in the endoplasmic reticulum. It localises to the golgi apparatus. The enzyme catalyses L-seryl-[protein] + GDP-beta-L-fucose = 3-O-(alpha-L-fucosyl)-L-seryl-[protein] + GDP + H(+). The catalysed reaction is L-threonyl-[protein] + GDP-beta-L-fucose = 3-O-(alpha-L-fucosyl)-L-threonyl-[protein] + GDP + H(+). Its pathway is protein modification; protein glycosylation. With respect to regulation, inhibited by EDTA and by Zn(2+). Catalyzes the reaction that attaches fucose through an O-glycosidic linkage to a conserved serine or threonine residue in the consensus sequence C1-X-X-S/T-C2 of thrombospondin type I repeats (TSRs) where C1 and C2 are the first and second cysteines of the repeat, respectively. O-fucosylates members of several protein families including the ADAMTS, the thrombospondin (TSP) and spondin families. Required for the proper secretion of ADAMTS family members such as ADAMTSL1 and ADAMTS13. The O-fucosylation of TSRs is also required for restricting epithelial to mesenchymal transition (EMT), maintaining the correct patterning of mesoderm and localization of the definite endoderm. This is GDP-fucose protein O-fucosyltransferase 2 (POFUT2) from Homo sapiens (Human).